The chain runs to 2475 residues: Polyprotein pp220 (2475 aa).

A lipid anchor (N-myristoyl glycine; by host) is attached at glycine 2. Residues 2184–2211 are a coiled coil; it reads RNQIIGELNAFRTQLEDTLREVNNLVQT.

It belongs to the asfivirus polyprotein pp220 family. Specific enzymatic cleavages in vivo by the viral pS273R protease yield mature proteins.

The protein resides in the host cytoplasm. It localises to the host perinuclear region. It is found in the virion. Its subcellular location is the host nucleus. Functionally, essential for the core assembly. Its myristoyl moiety may function as a membrane-anchoring signal to bind the developing core shell to the inner viral envelope. In terms of biological role, the structural protein p34 is a component of the virus core shell. Its function is as follows. The structural protein p14 is a component of the virus core shell. The structural protein p37 is a component of the virus core shell. Functionally, the structural protein p150 is a component of the virus core shell. The chain is Polyprotein pp220 from African swine fever virus (isolate Tick/Malawi/Lil 20-1/1983) (ASFV).